The chain runs to 330 residues: AH receptor-interacting protein (330 aa).

The PPIase FKBP-type domain maps to 31–121 (GTKATFHFRT…KDPLEGQRHC (91 aa)). S43 carries the post-translational modification Phosphoserine. 3 TPR repeats span residues 179-212 (VPLIHQEGNRLYREGQVKEAAAKYYDAIACLKNL), 231-264 (TPLLLNYCQCKLVAQEYYEVLDHCSSILNKYDDN), and 265-298 (VKAYFKRGKAHAAVWNAQEAQADFAKVLELDPAL).

In terms of assembly, interacts with RET in the pituitary gland; this interaction prevents the formation of the AIP-survivin complex.

Its subcellular location is the cytoplasm. In terms of biological role, may play a positive role in AHR-mediated (aromatic hydrocarbon receptor) signaling, possibly by influencing its receptivity for ligand and/or its nuclear targeting. The protein is AH receptor-interacting protein (Aip) of Rattus norvegicus (Rat).